The chain runs to 466 residues: MASPAQPAATMAAFARMVKGQVRSYSAPVDMAIPASKRKFIPSSGSYPKGFVVSGTHVGVKASNTKFPDLALISSETPCSAAAVFTTNKFQAAPVQVSRDIIKTRQGQGIRSVVINSGCANAVTGKGGLEDAVSMGKKVDECDGLNEPSTLVMSTGVIGQRLPISKILKKVPVAHANLSSTHDAWLTTARAICTTDTFPKLLSRTFTLPSSPGRTYSLAGMTKGAGMIHPNMATLLGVLCTDAPIEPSALQSLLKHSVNRSFNSISVDGDTSTNDTIAILANGAAGGAPISSSSSDDYAAMQDILTSFAQSLSQLVVRDGEGATKFVTVRVQNSPDYESGRLIASTIARSPLVKTALYGKDANWGRILCAIGYTQGVAPGTVVPEHTSVSFKPVDGSPVLNLLVNGEPEQVDEERASVILQEEDLEIVVDLGGGEKGEQGLGGEEAVYWFCDFSHEYVTINGDYRT.

Substrate contacts are provided by threonine 194, lysine 223, threonine 234, glutamate 321, asparagine 461, and threonine 466. The Nucleophile role is filled by threonine 234.

It belongs to the ArgJ family. Heterodimer of an alpha and a beta chain. The alpha and beta chains are autoproteolytically processed from a single precursor protein within the mitochondrion.

Its subcellular location is the mitochondrion matrix. The catalysed reaction is N(2)-acetyl-L-ornithine + L-glutamate = N-acetyl-L-glutamate + L-ornithine. It carries out the reaction L-glutamate + acetyl-CoA = N-acetyl-L-glutamate + CoA + H(+). Its pathway is amino-acid biosynthesis; L-arginine biosynthesis; L-ornithine and N-acetyl-L-glutamate from L-glutamate and N(2)-acetyl-L-ornithine (cyclic): step 1/1. It participates in amino-acid biosynthesis; L-arginine biosynthesis; N(2)-acetyl-L-ornithine from L-glutamate: step 1/4. Catalyzes two activities which are involved in the cyclic version of arginine biosynthesis: the synthesis of acetylglutamate from glutamate and acetyl-CoA, and of ornithine by transacetylation between acetylornithine and glutamate. This chain is Arginine biosynthesis bifunctional protein ArgJ, mitochondrial, found in Aspergillus flavus (strain ATCC 200026 / FGSC A1120 / IAM 13836 / NRRL 3357 / JCM 12722 / SRRC 167).